The following is a 246-amino-acid chain: O-antigen export system ATP-binding protein RfbB (246 aa).

One can recognise an ABC transporter domain in the interval 22 to 246 (SGIKDLVFHP…IIELYKQAMA (225 aa)). Residue 63–70 (GRNGAGKS) participates in ATP binding.

It belongs to the ABC transporter superfamily.

It localises to the cell inner membrane. Its function is as follows. May form an ATP-driven O-antigen export apparatus, in association with RfbA. The polypeptide is O-antigen export system ATP-binding protein RfbB (rfbB) (Klebsiella pneumoniae).